We begin with the raw amino-acid sequence, 45 residues long: Osteocalcin 1 (45 aa).

Residues alanine 1–glycine 41 enclose the Gla domain. Ca(2+) contacts are provided by glutamate 11, glutamate 15, glutamate 18, and glutamate 24. A 4-carboxyglutamate mark is found at glutamate 11, glutamate 15, and glutamate 18. A disulfide bond links cysteine 17 and cysteine 23.

The protein belongs to the osteocalcin/matrix Gla protein family. Post-translationally, gamma-carboxyglutamate residues are formed by vitamin K dependent carboxylation by GGCX. These residues are essential for the binding of calcium.

It localises to the secreted. Its function is as follows. The carboxylated form is one of the main organic components of the bone matrix, which constitutes 1-2% of the total bone protein. The carboxylated form binds strongly to apatite and calcium. The chain is Osteocalcin 1 from Diplodus sargus (White seabream).